Reading from the N-terminus, the 427-residue chain is Enolase (427 aa).

Position 163 (Gln163) interacts with (2R)-2-phosphoglycerate. Residue Glu205 is the Proton donor of the active site. Mg(2+)-binding residues include Asp242, Glu285, and Asp312. (2R)-2-phosphoglycerate is bound by residues Lys337, Arg366, Ser367, and Lys388. The active-site Proton acceptor is Lys337.

The protein belongs to the enolase family. Mg(2+) serves as cofactor.

The protein localises to the cytoplasm. It localises to the secreted. Its subcellular location is the cell surface. The catalysed reaction is (2R)-2-phosphoglycerate = phosphoenolpyruvate + H2O. The protein operates within carbohydrate degradation; glycolysis; pyruvate from D-glyceraldehyde 3-phosphate: step 4/5. Its function is as follows. Catalyzes the reversible conversion of 2-phosphoglycerate (2-PG) into phosphoenolpyruvate (PEP). It is essential for the degradation of carbohydrates via glycolysis. In Ralstonia pickettii (strain 12J), this protein is Enolase.